We begin with the raw amino-acid sequence, 67 residues long: Light-harvesting protein B-870 alpha chain (67 aa).

Residues 1–12 (MWRIWRLFDPMR) lie on the Cytoplasmic side of the membrane. Residues 13–33 (AMVAQAVFLLGLAVLIHLMLL) traverse the membrane as a helical segment. Position 29 (H29) interacts with a bacteriochlorophyll. Residues 34 to 67 (GTNKYNWLDGAKKAPVATAVAPVPAEVTSLAQAK) are Periplasmic-facing.

It belongs to the antenna complex alpha subunit family. As to quaternary structure, an alpha/beta heterodimer. The core complex is formed by different alpha and beta chains, binding bacteriochlorophyll molecules, and arranged most probably in tetrameric structures disposed around the reaction center. The non-pigmented gamma chains may constitute additional components.

It localises to the cell inner membrane. Its function is as follows. Antenna complexes are light-harvesting systems, which transfer the excitation energy to the reaction centers. This is Light-harvesting protein B-870 alpha chain (pufA) from Rubrivivax gelatinosus (strain NBRC 100245 / IL144).